The following is a 226-amino-acid chain: 2,3-bisphosphoglycerate-dependent phosphoglycerate mutase (226 aa).

Residues 8–15 (RHGQSVWN), 21–22 (TG), Arg58, 109–112 (ERMY), Lys120, 136–137 (RR), and 180–181 (GN) contribute to the substrate site. Residue His9 is the Tele-phosphohistidine intermediate of the active site. Glu109 acts as the Proton donor/acceptor in catalysis.

Belongs to the phosphoglycerate mutase family. BPG-dependent PGAM subfamily.

The enzyme catalyses (2R)-2-phosphoglycerate = (2R)-3-phosphoglycerate. Its pathway is carbohydrate degradation; glycolysis; pyruvate from D-glyceraldehyde 3-phosphate: step 3/5. Catalyzes the interconversion of 2-phosphoglycerate and 3-phosphoglycerate. The protein is 2,3-bisphosphoglycerate-dependent phosphoglycerate mutase of Chlamydia trachomatis serovar A (strain ATCC VR-571B / DSM 19440 / HAR-13).